A 379-amino-acid chain; its full sequence is Glucose-1-phosphate adenylyltransferase (379 aa).

Alpha-D-glucose 1-phosphate-binding positions include Gly164, 179–180 (EK), and Ser190.

The protein belongs to the bacterial/plant glucose-1-phosphate adenylyltransferase family. Homotetramer.

It catalyses the reaction alpha-D-glucose 1-phosphate + ATP + H(+) = ADP-alpha-D-glucose + diphosphate. The protein operates within glycan biosynthesis; glycogen biosynthesis. In terms of biological role, involved in the biosynthesis of ADP-glucose, a building block required for the elongation reactions to produce glycogen. Catalyzes the reaction between ATP and alpha-D-glucose 1-phosphate (G1P) to produce pyrophosphate and ADP-Glc. In Streptococcus uberis (strain ATCC BAA-854 / 0140J), this protein is Glucose-1-phosphate adenylyltransferase.